The chain runs to 2275 residues: Serine-rich adhesin for platelets (2275 aa).

Positions 1 to 89 (MSKRQKEFHD…VNMLHDQQAF (89 aa)) are cleaved as a signal peptide. A serine-rich repeat region 1, SRR1 region spans residues 90–230 (AASDAPLTSE…KTSTTSTSTA (141 aa)). Positions 100-111 (LNTQSETVGNQN) are enriched in polar residues. Disordered stretches follow at residues 100–229 (LNTQ…STST) and 751–2247 (NSMS…GLLG). Positions 112-128 (STTIEASTSTADSTSVT) are enriched in low complexity. Residues 129–140 (KNSSSVQTSNSD) are compositionally biased toward polar residues. Over residues 150–229 (VTSTTNSTSN…NKTSTTSTST (80 aa)) the composition is skewed to low complexity. The tract at residues 231-751 (PVKLRTFSRL…TTFKYEVTRN (521 aa)) is non-repeat region (NRR). Low complexity-rich tracts occupy residues 752–1392 (SMSD…LSLS) and 1402–2218 (SNSA…ATSE). Residues 752–2236 (SMSDSVSTSG…AQSEKRLPDT (1485 aa)) are serine-rich repeat region 2, SRR2. The LPXTG sorting signal signature appears at 2233–2237 (LPDTG). T2236 is modified (pentaglycyl murein peptidoglycan amidated threonine). A propeptide spans 2237 to 2275 (GDSIKQNGLLGGVMTLLVGLGLMKRKKKKDENDQDDSQA) (removed by sortase).

This sequence belongs to the serine-rich repeat protein (SRRP) family. Post-translationally, proteolytically cleaved by a metalloprotease. Glycosylated. It is probable that most of the Ser residues in SSR1 and SSR2 are O-GlcNAcylated. Sequential glycosylation by sugar transferases are able to generate complex sugar polymorphisms.

The protein resides in the secreted. Its subcellular location is the cell wall. Mediates binding to human platelets, possibly through a receptor-ligand interaction. Probably associated with virulence in endovascular infection. The chain is Serine-rich adhesin for platelets (sraP) from Staphylococcus aureus (strain MSSA476).